The following is a 230-amino-acid chain: Lipoprotein-releasing system ATP-binding protein LolD (230 aa).

In terms of domain architecture, ABC transporter spans 6–230 (LQASNLEKEY…GHFILPSETL (225 aa)). 42–49 (GSSGSGKS) provides a ligand contact to ATP.

It belongs to the ABC transporter superfamily. Lipoprotein translocase (TC 3.A.1.125) family. In terms of assembly, the complex is composed of two ATP-binding proteins (LolD) and two transmembrane proteins (LolC and LolE).

It localises to the cell inner membrane. Its function is as follows. Part of the ABC transporter complex LolCDE involved in the translocation of mature outer membrane-directed lipoproteins, from the inner membrane to the periplasmic chaperone, LolA. Responsible for the formation of the LolA-lipoprotein complex in an ATP-dependent manner. In Hydrogenovibrio crunogenus (strain DSM 25203 / XCL-2) (Thiomicrospira crunogena), this protein is Lipoprotein-releasing system ATP-binding protein LolD.